Consider the following 280-residue polypeptide: uncharacterized protein (280 aa).

Disordered regions lie at residues 1 to 83 (MELK…EEEQ) and 248 to 280 (IRHREEKDQRDQNQKQKQDDKEQDSYKIEEARL). A compositionally biased stretch (polar residues) spans 12-25 (SAKTDNHTVYQNSP). Composition is skewed to basic and acidic residues over residues 41-71 (KQTRQEKTTSSKGNTRTESRKFADEEKRVDD) and 249-280 (RHREEKDQRDQNQKQKQDDKEQDSYKIEEARL).

This sequence belongs to the chlamydial CPn_0705/CT_671/TC_0042 family.

This is an uncharacterized protein from Chlamydia pneumoniae (Chlamydophila pneumoniae).